The primary structure comprises 299 residues: Coenzyme PQQ synthesis protein B (299 aa).

Belongs to the PqqB family.

Its pathway is cofactor biosynthesis; pyrroloquinoline quinone biosynthesis. In terms of biological role, may be involved in the transport of PQQ or its precursor to the periplasm. The sequence is that of Coenzyme PQQ synthesis protein B from Methylobacterium radiotolerans (strain ATCC 27329 / DSM 1819 / JCM 2831 / NBRC 15690 / NCIMB 10815 / 0-1).